Reading from the N-terminus, the 232-residue chain is MPESADPRDRLIVALDLPDVAAAERLVARIGDAATFYKIGYRLAYAGGLDFAARLAREGKKTFLDLKLHDIGNTVEEGVRSASALGATFLTVHAYPQTMRAAVRGRGPGLKILAVTVLTSYDDADAAEAGYALPVADLVAQRASQAAAIGIDGIVCAAAEAGAVRGRIGPSGLIVTPGIRPAGAEAGDQKRVMTPGQARAAGIDHVVVGRPITGAGDPRAVARTIVAEMENV.

Substrate contacts are provided by residues Asp16, Lys38, 65–74, Thr119, Arg180, Gln189, Gly209, and Arg210; that span reads DLKLHDIGNT. Lys67 acts as the Proton donor in catalysis.

Belongs to the OMP decarboxylase family. Type 1 subfamily. In terms of assembly, homodimer.

It catalyses the reaction orotidine 5'-phosphate + H(+) = UMP + CO2. It functions in the pathway pyrimidine metabolism; UMP biosynthesis via de novo pathway; UMP from orotate: step 2/2. In terms of biological role, catalyzes the decarboxylation of orotidine 5'-monophosphate (OMP) to uridine 5'-monophosphate (UMP). The polypeptide is Orotidine 5'-phosphate decarboxylase (Methylorubrum populi (strain ATCC BAA-705 / NCIMB 13946 / BJ001) (Methylobacterium populi)).